Here is a 181-residue protein sequence, read N- to C-terminus: Large ribosomal subunit protein uL5 (181 aa).

This sequence belongs to the universal ribosomal protein uL5 family. Part of the 50S ribosomal subunit; contacts the 5S rRNA and probably tRNA. Forms a bridge to the 30S subunit in the 70S ribosome.

In terms of biological role, this is one of the proteins that bind and probably mediate the attachment of the 5S RNA into the large ribosomal subunit, where it forms part of the central protuberance. In the 70S ribosome it contacts protein S13 of the 30S subunit (bridge B1b), connecting the 2 subunits; this bridge is implicated in subunit movement. May contact the P site tRNA; the 5S rRNA and some of its associated proteins might help stabilize positioning of ribosome-bound tRNAs. The sequence is that of Large ribosomal subunit protein uL5 from Methanococcus maripaludis (strain C5 / ATCC BAA-1333).